A 186-amino-acid chain; its full sequence is Mediator of RNA polymerase II transcription subunit 10a (186 aa).

It belongs to the Mediator complex subunit 10 family. As to quaternary structure, mono-, di- and oligomers. Component of the Mediator complex. Interacts with GEBPL.

The protein resides in the nucleus. Component of the Mediator complex, a coactivator involved in the regulated transcription of nearly all RNA polymerase II-dependent genes. Mediator functions as a bridge to convey information from gene-specific regulatory proteins to the basal RNA polymerase II transcription machinery. The Mediator complex, having a compact conformation in its free form, is recruited to promoters by direct interactions with regulatory proteins and serves for the assembly of a functional pre-initiation complex with RNA polymerase II and the general transcription factors. In Arabidopsis thaliana (Mouse-ear cress), this protein is Mediator of RNA polymerase II transcription subunit 10a.